A 312-amino-acid chain; its full sequence is Glyoxylate/hydroxypyruvate reductase A (312 aa).

Arginine 227 is a catalytic residue. Histidine 275 (proton donor) is an active-site residue.

It belongs to the D-isomer specific 2-hydroxyacid dehydrogenase family. GhrA subfamily.

It localises to the cytoplasm. It catalyses the reaction glycolate + NADP(+) = glyoxylate + NADPH + H(+). The enzyme catalyses (R)-glycerate + NAD(+) = 3-hydroxypyruvate + NADH + H(+). The catalysed reaction is (R)-glycerate + NADP(+) = 3-hydroxypyruvate + NADPH + H(+). Its function is as follows. Catalyzes the NADPH-dependent reduction of glyoxylate and hydroxypyruvate into glycolate and glycerate, respectively. In Klebsiella pneumoniae subsp. pneumoniae (strain ATCC 700721 / MGH 78578), this protein is Glyoxylate/hydroxypyruvate reductase A.